Consider the following 379-residue polypeptide: Homoserine O-succinyltransferase (379 aa).

In terms of domain architecture, AB hydrolase-1 spans 51 to 360 (NAVLICHALS…DSPYGHDAFL (310 aa)). Ser157 functions as the Nucleophile in the catalytic mechanism. Arg227 is a binding site for substrate. Active-site residues include Asp323 and His356. Asp357 contributes to the substrate binding site.

It belongs to the AB hydrolase superfamily. MetX family. As to quaternary structure, homodimer.

The protein localises to the cytoplasm. It catalyses the reaction L-homoserine + succinyl-CoA = O-succinyl-L-homoserine + CoA. It functions in the pathway amino-acid biosynthesis; L-methionine biosynthesis via de novo pathway; O-succinyl-L-homoserine from L-homoserine: step 1/1. Functionally, transfers a succinyl group from succinyl-CoA to L-homoserine, forming succinyl-L-homoserine. This is Homoserine O-succinyltransferase from Pseudomonas entomophila (strain L48).